The following is a 132-amino-acid chain: Small ribosomal subunit protein uS8 (132 aa).

The protein belongs to the universal ribosomal protein uS8 family. In terms of assembly, part of the 30S ribosomal subunit. Contacts proteins S5 and S12.

One of the primary rRNA binding proteins, it binds directly to 16S rRNA central domain where it helps coordinate assembly of the platform of the 30S subunit. The chain is Small ribosomal subunit protein uS8 from Staphylococcus epidermidis (strain ATCC 35984 / DSM 28319 / BCRC 17069 / CCUG 31568 / BM 3577 / RP62A).